A 44-amino-acid polypeptide reads, in one-letter code: Protein PsbN (44 aa).

A helical membrane pass occupies residues 6-26 (FFFTFFLWFLLLSVTGYSVYV).

It belongs to the PsbN family.

The protein localises to the plastid. It localises to the chloroplast thylakoid membrane. Its function is as follows. May play a role in photosystem I and II biogenesis. This is Protein PsbN from Chlamydomonas reinhardtii (Chlamydomonas smithii).